The following is a 342-amino-acid chain: L-threonine 3-dehydrogenase (342 aa).

Residue C38 participates in Zn(2+) binding. Active-site charge relay system residues include T40 and H43. The Zn(2+) site is built by H63, E64, C93, C96, C99, and C107. Residues I175, D195, R200, L262 to I264, and I286 to Y287 contribute to the NAD(+) site.

This sequence belongs to the zinc-containing alcohol dehydrogenase family. As to quaternary structure, homotetramer. Requires Zn(2+) as cofactor.

The protein resides in the cytoplasm. It carries out the reaction L-threonine + NAD(+) = (2S)-2-amino-3-oxobutanoate + NADH + H(+). Its pathway is amino-acid degradation; L-threonine degradation via oxydo-reductase pathway; glycine from L-threonine: step 1/2. Catalyzes the NAD(+)-dependent oxidation of L-threonine to 2-amino-3-ketobutyrate. The chain is L-threonine 3-dehydrogenase from Burkholderia vietnamiensis (strain G4 / LMG 22486) (Burkholderia cepacia (strain R1808)).